We begin with the raw amino-acid sequence, 331 residues long: MAKMYYDKDADLNLLKNKKIAIIGFGSQGHAHALNLRDSGLDVIVGLYEGSKSKERAEKEGLRVYTVEEAAKVADIIMMLIPDEKQAKVYKESIEKNLTEGKALAFAHGFNIHFKQIVPPKNVDVFMVAPKGPGHLVRRVYQEGKGVPNLVAVYQDYTGKAFEIALAYAKGIGGTRAGVIETTFKEETETDLFGEQAVLCGGVTELMKAGFETLVEAGYQPEIAYFECVHEMKLIVDLIYEGGFSYMRYSISDTAEFGDYMTGKRIITEETRKEMKKVLSEIQSGKFAKEWLLENQVGRPQYNAIKDKEANHLIEKVGKGLREMMAWIKKE.

The region spanning 2–182 (AKMYYDKDAD…GGTRAGVIET (181 aa)) is the KARI N-terminal Rossmann domain. Residues 25–28 (FGSQ), serine 51, serine 53, and 83–86 (DEKQ) contribute to the NADP(+) site. Histidine 108 is a catalytic residue. Position 134 (glycine 134) interacts with NADP(+). One can recognise a KARI C-terminal knotted domain in the interval 183-328 (TFKEETETDL…KGLREMMAWI (146 aa)). Residues aspartate 191, glutamate 195, glutamate 227, and glutamate 231 each coordinate Mg(2+). Serine 252 is a binding site for substrate.

This sequence belongs to the ketol-acid reductoisomerase family. The cofactor is Mg(2+).

The catalysed reaction is (2R)-2,3-dihydroxy-3-methylbutanoate + NADP(+) = (2S)-2-acetolactate + NADPH + H(+). The enzyme catalyses (2R,3R)-2,3-dihydroxy-3-methylpentanoate + NADP(+) = (S)-2-ethyl-2-hydroxy-3-oxobutanoate + NADPH + H(+). Its pathway is amino-acid biosynthesis; L-isoleucine biosynthesis; L-isoleucine from 2-oxobutanoate: step 2/4. It participates in amino-acid biosynthesis; L-valine biosynthesis; L-valine from pyruvate: step 2/4. In terms of biological role, involved in the biosynthesis of branched-chain amino acids (BCAA). Catalyzes an alkyl-migration followed by a ketol-acid reduction of (S)-2-acetolactate (S2AL) to yield (R)-2,3-dihydroxy-isovalerate. In the isomerase reaction, S2AL is rearranged via a Mg-dependent methyl migration to produce 3-hydroxy-3-methyl-2-ketobutyrate (HMKB). In the reductase reaction, this 2-ketoacid undergoes a metal-dependent reduction by NADPH to yield (R)-2,3-dihydroxy-isovalerate. The sequence is that of Ketol-acid reductoisomerase (NADP(+)) from Thermoanaerobacter sp. (strain X514).